Reading from the N-terminus, the 289-residue chain is Protease HtpX homolog (289 aa).

A run of 2 helical transmembrane segments spans residues 7 to 26 (TAAL…YWVI) and 31 to 48 (GLII…FSWY). Residue His132 participates in Zn(2+) binding. Glu133 is a catalytic residue. His136 provides a ligand contact to Zn(2+). 2 helical membrane-spanning segments follow: residues 151-171 (VAGA…FGGG) and 182-202 (LGVL…QLAI). Residue Glu207 coordinates Zn(2+).

Belongs to the peptidase M48B family. Requires Zn(2+) as cofactor.

The protein localises to the cell inner membrane. This Nostoc punctiforme (strain ATCC 29133 / PCC 73102) protein is Protease HtpX homolog.